The primary structure comprises 156 residues: Small ribosomal subunit protein uS7 (156 aa).

Belongs to the universal ribosomal protein uS7 family. Part of the 30S ribosomal subunit. Contacts proteins S9 and S11.

In terms of biological role, one of the primary rRNA binding proteins, it binds directly to 16S rRNA where it nucleates assembly of the head domain of the 30S subunit. Is located at the subunit interface close to the decoding center, probably blocks exit of the E-site tRNA. This Bacillus velezensis (strain DSM 23117 / BGSC 10A6 / LMG 26770 / FZB42) (Bacillus amyloliquefaciens subsp. plantarum) protein is Small ribosomal subunit protein uS7.